The following is a 196-amino-acid chain: 3-dehydroquinate dehydratase (196 aa).

Residues 23-25 (ELR) and Arg-45 contribute to the 3-dehydroquinate site. His-98 (proton donor/acceptor) is an active-site residue. Lys-122 (schiff-base intermediate with substrate) is an active-site residue. 3-dehydroquinate contacts are provided by Arg-159 and Gln-182.

It belongs to the type-I 3-dehydroquinase family. In terms of assembly, homodimer.

It carries out the reaction 3-dehydroquinate = 3-dehydroshikimate + H2O. It participates in metabolic intermediate biosynthesis; chorismate biosynthesis; chorismate from D-erythrose 4-phosphate and phosphoenolpyruvate: step 3/7. Involved in the third step of the chorismate pathway, which leads to the biosynthesis of aromatic amino acids. Catalyzes the cis-dehydration of 3-dehydroquinate (DHQ) and introduces the first double bond of the aromatic ring to yield 3-dehydroshikimate. The polypeptide is 3-dehydroquinate dehydratase (Archaeoglobus fulgidus (strain ATCC 49558 / DSM 4304 / JCM 9628 / NBRC 100126 / VC-16)).